We begin with the raw amino-acid sequence, 173 residues long: Crossover junction endodeoxyribonuclease RuvC (173 aa).

Residues D8, E67, and D139 contribute to the active site. 3 residues coordinate Mg(2+): D8, E67, and D139.

It belongs to the RuvC family. Homodimer which binds Holliday junction (HJ) DNA. The HJ becomes 2-fold symmetrical on binding to RuvC with unstacked arms; it has a different conformation from HJ DNA in complex with RuvA. In the full resolvosome a probable DNA-RuvA(4)-RuvB(12)-RuvC(2) complex forms which resolves the HJ. It depends on Mg(2+) as a cofactor.

Its subcellular location is the cytoplasm. The enzyme catalyses Endonucleolytic cleavage at a junction such as a reciprocal single-stranded crossover between two homologous DNA duplexes (Holliday junction).. Functionally, the RuvA-RuvB-RuvC complex processes Holliday junction (HJ) DNA during genetic recombination and DNA repair. Endonuclease that resolves HJ intermediates. Cleaves cruciform DNA by making single-stranded nicks across the HJ at symmetrical positions within the homologous arms, yielding a 5'-phosphate and a 3'-hydroxyl group; requires a central core of homology in the junction. The consensus cleavage sequence is 5'-(A/T)TT(C/G)-3'. Cleavage occurs on the 3'-side of the TT dinucleotide at the point of strand exchange. HJ branch migration catalyzed by RuvA-RuvB allows RuvC to scan DNA until it finds its consensus sequence, where it cleaves and resolves the cruciform DNA. This chain is Crossover junction endodeoxyribonuclease RuvC, found in Photorhabdus laumondii subsp. laumondii (strain DSM 15139 / CIP 105565 / TT01) (Photorhabdus luminescens subsp. laumondii).